Consider the following 639-residue polypeptide: MSIASVKTPSSLREAQIQSLEKLLNLNQDVNELESSPQHASNFPIWKVLIFDKAGSETISSVLRISDLRKHGVTVHMNITSFRQPIADVPAIYFVQPTQENIELIIEDLSKGLYESAYVCFSSTISRALLEQFAELASKTNTSHMIHQVYDQYLNYVVLESDFFSLQLPKIFHTFHNPSSDEALINSRVQDIVNGLFSVIVTLGTIPIIRCPQGSAAEMVAQKLNQRLKDHLMNTKDAFVSVNPKPRPILILLDRTVDLIPMINHSWTYQALIHDTLNMQLNRITVESVDDGKMTKRFYDLDGNDFFWESNASKPFPKVAENIDEELTRYKNDASEITRKSGVSSLEEVNVDAFADSTYLKSAVSLLPELTARKQILDMHMNIATALLKAIQERHLDDFFQLEDNITGLNRSAILACINNKEQGTPEDKLRFFIIWYLSVDSVPASDLQAYEEALVNNGCTLEALNFVKRVREITKMTMLASSTTRPATGQTGDNLFRGFSSLSTRFTDRFKEAGIGGLENIISGVRNLIPFRKDGTITSIVQSLMDPGSSPASKQTESYLLLDPKSARAITVNNDPRAMNKRQTFSEAIVCVLGGGNYLEYGNLADWAREQNPKKRIIYGSTDILSPSEFMEEMASLS.

The protein belongs to the STXBP/unc-18/SEC1 family.

The protein resides in the cytoplasm. In Schizosaccharomyces pombe (strain 972 / ATCC 24843) (Fission yeast), this protein is Protein sly1 (sly1).